The primary structure comprises 249 residues: 4-hydroxy-tetrahydrodipicolinate reductase (249 aa).

NAD(+) is bound by residues Asp-32, Gly-74–Thr-76, and Ser-99–Tyr-102. The active-site Proton donor/acceptor is His-134. Position 135 (His-135) interacts with (S)-2,3,4,5-tetrahydrodipicolinate. Lys-138 functions as the Proton donor in the catalytic mechanism. (S)-2,3,4,5-tetrahydrodipicolinate is bound at residue Gly-144 to Thr-145.

Belongs to the DapB family.

It localises to the cytoplasm. It catalyses the reaction (S)-2,3,4,5-tetrahydrodipicolinate + NAD(+) + H2O = (2S,4S)-4-hydroxy-2,3,4,5-tetrahydrodipicolinate + NADH + H(+). The enzyme catalyses (S)-2,3,4,5-tetrahydrodipicolinate + NADP(+) + H2O = (2S,4S)-4-hydroxy-2,3,4,5-tetrahydrodipicolinate + NADPH + H(+). The protein operates within amino-acid biosynthesis; L-lysine biosynthesis via DAP pathway; (S)-tetrahydrodipicolinate from L-aspartate: step 4/4. Catalyzes the conversion of 4-hydroxy-tetrahydrodipicolinate (HTPA) to tetrahydrodipicolinate. In Chlorobaculum tepidum (strain ATCC 49652 / DSM 12025 / NBRC 103806 / TLS) (Chlorobium tepidum), this protein is 4-hydroxy-tetrahydrodipicolinate reductase.